The sequence spans 304 residues: Non-specific ribonucleoside hydrolase RihC (304 aa).

His233 is an active-site residue.

Belongs to the IUNH family. RihC subfamily.

Hydrolyzes both purine and pyrimidine ribonucleosides with a broad-substrate specificity. This is Non-specific ribonucleoside hydrolase RihC from Escherichia coli O139:H28 (strain E24377A / ETEC).